The chain runs to 367 residues: Phosphoribosylaminoimidazole-succinocarboxamide synthase (367 aa).

The protein belongs to the SAICAR synthetase family.

The enzyme catalyses 5-amino-1-(5-phospho-D-ribosyl)imidazole-4-carboxylate + L-aspartate + ATP = (2S)-2-[5-amino-1-(5-phospho-beta-D-ribosyl)imidazole-4-carboxamido]succinate + ADP + phosphate + 2 H(+). Its pathway is purine metabolism; IMP biosynthesis via de novo pathway; 5-amino-1-(5-phospho-D-ribosyl)imidazole-4-carboxamide from 5-amino-1-(5-phospho-D-ribosyl)imidazole-4-carboxylate: step 1/2. In Shewanella pealeana (strain ATCC 700345 / ANG-SQ1), this protein is Phosphoribosylaminoimidazole-succinocarboxamide synthase.